The following is an 89-amino-acid chain: MGIKLINIGFGNIVSANRLVAIVSPESAPIKRIIQEARDRGMLIDATYGRRTRAVIITDSDHVILSAVQPETVAHRLSTKEEVVDEVDE.

The protein belongs to the RemA family.

This is Putative regulatory protein CLH_1161 from Clostridium botulinum (strain Alaska E43 / Type E3).